A 223-amino-acid polypeptide reads, in one-letter code: Alpha-S2-casein (223 aa).

A signal peptide spans 1–15; the sequence is MKLFIFTCLLAVALA. Phosphoserine occurs at positions 23, 24, 25, 28, 46, 71, 72, and 73. 2 repeats span residues 76–128 and 129–223; these read FADI…TLGK and EQIS…ERQA. 3 positions are modified to phosphoserine: serine 132, serine 147, and serine 155.

The protein belongs to the alpha-casein family. As to expression, mammary gland specific. Secreted in milk.

It is found in the secreted. Important role in the capacity of milk to transport calcium phosphate. This is Alpha-S2-casein (CSN1S2) from Cavia porcellus (Guinea pig).